The following is a 346-amino-acid chain: S-adenosylmethionine:tRNA ribosyltransferase-isomerase (346 aa).

Belongs to the QueA family. As to quaternary structure, monomer.

The protein localises to the cytoplasm. It catalyses the reaction 7-aminomethyl-7-carbaguanosine(34) in tRNA + S-adenosyl-L-methionine = epoxyqueuosine(34) in tRNA + adenine + L-methionine + 2 H(+). The protein operates within tRNA modification; tRNA-queuosine biosynthesis. Its function is as follows. Transfers and isomerizes the ribose moiety from AdoMet to the 7-aminomethyl group of 7-deazaguanine (preQ1-tRNA) to give epoxyqueuosine (oQ-tRNA). This is S-adenosylmethionine:tRNA ribosyltransferase-isomerase from Shewanella denitrificans (strain OS217 / ATCC BAA-1090 / DSM 15013).